The chain runs to 624 residues: 1-deoxy-D-xylulose-5-phosphate synthase (624 aa).

Thiamine diphosphate-binding positions include histidine 74 and 115–117 (GHS). Aspartate 146 contributes to the Mg(2+) binding site. Residues 147-148 (GA), asparagine 175, tyrosine 286, and glutamate 366 contribute to the thiamine diphosphate site. Asparagine 175 contributes to the Mg(2+) binding site.

Belongs to the transketolase family. DXPS subfamily. Homodimer. The cofactor is Mg(2+). Thiamine diphosphate is required as a cofactor.

It catalyses the reaction D-glyceraldehyde 3-phosphate + pyruvate + H(+) = 1-deoxy-D-xylulose 5-phosphate + CO2. Its pathway is metabolic intermediate biosynthesis; 1-deoxy-D-xylulose 5-phosphate biosynthesis; 1-deoxy-D-xylulose 5-phosphate from D-glyceraldehyde 3-phosphate and pyruvate: step 1/1. Functionally, catalyzes the acyloin condensation reaction between C atoms 2 and 3 of pyruvate and glyceraldehyde 3-phosphate to yield 1-deoxy-D-xylulose-5-phosphate (DXP). This is 1-deoxy-D-xylulose-5-phosphate synthase from Clostridium kluyveri (strain NBRC 12016).